A 122-amino-acid polypeptide reads, in one-letter code: Large ribosomal subunit protein uL14c (122 aa).

This sequence belongs to the universal ribosomal protein uL14 family. Part of the 50S ribosomal subunit.

Its subcellular location is the plastid. The protein resides in the chloroplast. Functionally, binds to 23S rRNA. The chain is Large ribosomal subunit protein uL14c from Liriodendron tulipifera (Tuliptree).